Reading from the N-terminus, the 127-residue chain is Arginine decarboxylase proenzyme (127 aa).

Serine 72 functions as the Schiff-base intermediate with substrate; via pyruvic acid in the catalytic mechanism. Serine 72 carries the pyruvic acid (Ser); by autocatalysis modification. The active-site Proton acceptor; for processing activity is histidine 77. Catalysis depends on cysteine 92, which acts as the Proton donor; for catalytic activity.

It belongs to the prokaryotic AdoMetDC family. Type 1 subfamily. As to quaternary structure, heterooctamer of four alpha and four beta chains arranged as a tetramer of alpha/beta heterodimers. Pyruvate serves as cofactor. In terms of processing, is synthesized initially as an inactive proenzyme. Formation of the active enzyme involves a self-maturation process in which the active site pyruvoyl group is generated from an internal serine residue via an autocatalytic post-translational modification. Two non-identical subunits are generated from the proenzyme in this reaction, and the pyruvate is formed at the N-terminus of the alpha chain, which is derived from the carboxyl end of the proenzyme. The post-translation cleavage follows an unusual pathway, termed non-hydrolytic serinolysis, in which the side chain hydroxyl group of the serine supplies its oxygen atom to form the C-terminus of the beta chain, while the remainder of the serine residue undergoes an oxidative deamination to produce ammonia and the pyruvoyl group blocking the N-terminus of the alpha chain.

It carries out the reaction L-arginine + H(+) = agmatine + CO2. It participates in amine and polyamine biosynthesis; agmatine biosynthesis; agmatine from L-arginine: step 1/1. Functionally, specifically catalyzes the decarboxylation of L-arginine to agmatine. Has no S-adenosylmethionine decarboxylase (AdoMetDC) activity. The polypeptide is Arginine decarboxylase proenzyme (Staphylothermus marinus (strain ATCC 43588 / DSM 3639 / JCM 9404 / F1)).